Reading from the N-terminus, the 159-residue chain is Mating-type P-specific polypeptide Pi (159 aa).

A DNA-binding region (homeobox; TALE-type; partial) is located at residues Met-103–Arg-159.

This sequence belongs to the TALE/M-ATYP homeobox family.

The protein localises to the nucleus. Functionally, mating type proteins are sequence specific DNA-binding proteins that act as master switches in yeast differentiation by controlling gene expression in a cell type-specific fashion. Required for meiosis, but plays no role in conjugation. The chain is Mating-type P-specific polypeptide Pi (matPi) from Schizosaccharomyces kambucha (Fission yeast).